A 332-amino-acid chain; its full sequence is COP9 signalosome complex subunit 5 (332 aa).

The 138-residue stretch at 54-191 (VKISAIALLK…IGAFRTYPQG (138 aa)) folds into the MPN domain. Zn(2+) is bound by residues H137, H139, and D150. Residues 137–150 (HSHPGYGCWLSGID) carry the JAMM motif motif.

Belongs to the peptidase M67A family. CSN5 subfamily. Component of the CSN complex. The holocomplex is comprised of 8 subunits csn1-8. In the complex, it probably interacts directly with csn1, csn2, csn3, csn4, csn6 and csn8. Requires a divalent metal cation as cofactor.

The protein resides in the cytoplasm. It is found in the nucleus. In terms of biological role, probable protease subunit of the COP9 signalosome complex (CSN), a complex involved in various cellular and developmental processes. The CSN complex is an essential regulator of the ubiquitin (Ubl) conjugation pathway by mediating the deneddylation of the cullin subunits of E3 ligasew complexes, leading to modify the Ubl ligase activity. In the complex, it probably acts as the catalytic center that mediates the cleavage of Nedd8 from cullins. Csn5 is essential for growth or survival. The sequence is that of COP9 signalosome complex subunit 5 (csn5) from Dictyostelium discoideum (Social amoeba).